The primary structure comprises 522 residues: Glucose-1-phosphate adenylyltransferase large subunit, chloroplastic/amyloplastic (522 aa).

The transit peptide at 1 to 62 (MSSMQFSSVL…RGPAATGAQC (62 aa)) directs the protein to the chloroplast. Basic and acidic residues predominate over residues 28 to 42 (SERLKVGDSSSIRHE). The tract at residues 28 to 54 (SERLKVGDSSSIRHERASRRMCNGGRG) is disordered.

This sequence belongs to the bacterial/plant glucose-1-phosphate adenylyltransferase family. As to quaternary structure, heterotetramer. Abundantly expressed in the whole grains, a slightly less abundant expression is seen in leaves, while a low level expression is seen in the roots. A greater expression is seen in the endosperm than in the embryo and pericarp layers.

It is found in the plastid. Its subcellular location is the chloroplast. It localises to the amyloplast. It carries out the reaction alpha-D-glucose 1-phosphate + ATP + H(+) = ADP-alpha-D-glucose + diphosphate. It participates in glycan biosynthesis; starch biosynthesis. Insensitive to 3'phosphoglycerate and orthophosphate. In terms of biological role, this protein plays a role in synthesis of starch. It catalyzes the synthesis of the activated glycosyl donor, ADP-glucose from Glc-1-P and ATP. This Triticum aestivum (Wheat) protein is Glucose-1-phosphate adenylyltransferase large subunit, chloroplastic/amyloplastic (AGP-L).